A 312-amino-acid chain; its full sequence is Malate dehydrogenase (312 aa).

NAD(+)-binding positions include 12 to 17 (GAGFTG) and Asp36. Arg87 and Arg93 together coordinate substrate. NAD(+) contacts are provided by residues Asn100 and 123 to 125 (LTN). Asn125 is a substrate binding site. At Ser149 the chain carries Phosphoserine. Residue Arg156 coordinates substrate. His180 serves as the catalytic Proton acceptor.

It belongs to the LDH/MDH superfamily. MDH type 3 family.

The catalysed reaction is (S)-malate + NAD(+) = oxaloacetate + NADH + H(+). Its function is as follows. Catalyzes the reversible oxidation of malate to oxaloacetate. This is Malate dehydrogenase from Bacillus licheniformis (strain ATCC 14580 / DSM 13 / JCM 2505 / CCUG 7422 / NBRC 12200 / NCIMB 9375 / NCTC 10341 / NRRL NRS-1264 / Gibson 46).